A 434-amino-acid chain; its full sequence is ATP-dependent protease ATPase subunit HslU (434 aa).

Residues isoleucine 18, 60-65 (GVGKTE), aspartate 247, glutamate 312, and arginine 384 contribute to the ATP site.

It belongs to the ClpX chaperone family. HslU subfamily. A double ring-shaped homohexamer of HslV is capped on each side by a ring-shaped HslU homohexamer. The assembly of the HslU/HslV complex is dependent on binding of ATP.

It localises to the cytoplasm. Functionally, ATPase subunit of a proteasome-like degradation complex; this subunit has chaperone activity. The binding of ATP and its subsequent hydrolysis by HslU are essential for unfolding of protein substrates subsequently hydrolyzed by HslV. HslU recognizes the N-terminal part of its protein substrates and unfolds these before they are guided to HslV for hydrolysis. This chain is ATP-dependent protease ATPase subunit HslU, found in Brucella anthropi (strain ATCC 49188 / DSM 6882 / CCUG 24695 / JCM 21032 / LMG 3331 / NBRC 15819 / NCTC 12168 / Alc 37) (Ochrobactrum anthropi).